The chain runs to 827 residues: MSMSHLYGTDGEDGVEMENFEVSDWDLQNEFNPHRHRHRQTKEEATYGVWAERDSDEERPSFGGKRSRDYSAPVNFISAGLKKSAAEDVSDEDSDEDEKPVKQEEIPKEFVPKKLKTGGNFKPSQKGFVGGTKSFMDFGSWERHTKGIGQKLLQKMGYVPGRGLGKNAQGIINPIEAKQRKGKGAVGAYGSERTSQSLQDFPVVDSEEEAEEEFQKELSQWRKDPNGGKKKPKYSYKTVEELKAKGRINKQLSTPQKELSQVKVIDMTGREQKVYYSYSQISHKHNIPDDNPQQLLGKDSKPQGFALPELEHNLQLLIDITEQEIIQSDRQLQYERDMVVNLTHEIQKMSEILSHEETAISNLSKVLDMVEECERRMQPSCENPLTLDECAKIFETLQDKYYEEYRMSDRVDLAVAIVYPLMKDYFKNWDPLKDCTYGTEIIAKWKSLLENDQLLSHGGQDLSTDAFHRLMWEIWMPYVRNIVAQWQPRNCGSMVDFLDSWVHIIPVWILDNILDQLIFPKLQKEVENWNPLTDTVPIHSWIHPWLPLMQARLEPLYSPIRNKLANALQKWHPSDSSAKLILQPWKDVFTPGSWEAFMVKNIVPKLGMCLNELIINPHQQHMDAFYWVIDWEGMISVSSLVGLLEKHFFPKWLQVLCSWLSNSPNYEEITKWYLGWKSMFSDQVLAHPSIKDKFNEALDIMNRAVSSSVGGYMQPGARENIAYLTHTERRKDFQYEAMQERREAENMAQRGIGMAASSVPMNFKDLIQTKAEEHNIVFMPVIGKRHEGKQLYTFGRIVIYIDRGVVFVQGEKTWVPTSLQSLIDMAK.

Disordered stretches follow at residues 31–129 (FNPH…KGFV) and 179–203 (QRKG…DFPV). A compositionally biased stretch (basic and acidic residues) spans 41 to 60 (TKEEATYGVWAERDSDEERP). Residues 88–98 (DVSDEDSDEDE) show a composition bias toward acidic residues. The segment covering 99-112 (KPVKQEEIPKEFVP) has biased composition (basic and acidic residues). Residues 145-191 (TKGIGQKLLQKMGYVPGRGLGKNAQGIINPIEAKQRKGKGAVGAYGS) form the G-patch domain.

It belongs to the TFP11/STIP family. In terms of assembly, identified in the spliceosome C complex.

It localises to the nucleus. Functionally, involved in pre-mRNA splicing, specifically in spliceosome disassembly during late-stage splicing events. The chain is Tuftelin-interacting protein 11 (TFIP11) from Gallus gallus (Chicken).